A 431-amino-acid chain; its full sequence is Bifunctional protein GlmU (431 aa).

Residues 1-223 (MNLSIVILAA…EENFKGVNSK (223 aa)) form a pyrophosphorylase region. UDP-N-acetyl-alpha-D-glucosamine is bound by residues 8–11 (LAAG), Lys-22, Gln-74, and 81–82 (GT). Asp-102 serves as a coordination point for Mg(2+). UDP-N-acetyl-alpha-D-glucosamine-binding residues include Gly-135, Glu-149, Asn-164, and Asn-221. Asn-221 is a binding site for Mg(2+). The linker stretch occupies residues 224–244 (ADLAEAEAIMTGRIRRRWMRE). The segment at 245–431 (GVRMRLPETI…FFARYFSSSK (187 aa)) is N-acetyltransferase. Residues Arg-308 and Lys-325 each coordinate UDP-N-acetyl-alpha-D-glucosamine. The active-site Proton acceptor is the His-336. UDP-N-acetyl-alpha-D-glucosamine contacts are provided by Tyr-339 and Asn-350. Acetyl-CoA is bound by residues Ala-353, 359–360 (NY), Ser-378, Ala-396, and Arg-413.

It in the N-terminal section; belongs to the N-acetylglucosamine-1-phosphate uridyltransferase family. This sequence in the C-terminal section; belongs to the transferase hexapeptide repeat family. Homotrimer. Mg(2+) is required as a cofactor.

The protein localises to the cytoplasm. The enzyme catalyses alpha-D-glucosamine 1-phosphate + acetyl-CoA = N-acetyl-alpha-D-glucosamine 1-phosphate + CoA + H(+). The catalysed reaction is N-acetyl-alpha-D-glucosamine 1-phosphate + UTP + H(+) = UDP-N-acetyl-alpha-D-glucosamine + diphosphate. It functions in the pathway nucleotide-sugar biosynthesis; UDP-N-acetyl-alpha-D-glucosamine biosynthesis; N-acetyl-alpha-D-glucosamine 1-phosphate from alpha-D-glucosamine 6-phosphate (route II): step 2/2. It participates in nucleotide-sugar biosynthesis; UDP-N-acetyl-alpha-D-glucosamine biosynthesis; UDP-N-acetyl-alpha-D-glucosamine from N-acetyl-alpha-D-glucosamine 1-phosphate: step 1/1. The protein operates within bacterial outer membrane biogenesis; LPS lipid A biosynthesis. Its function is as follows. Catalyzes the last two sequential reactions in the de novo biosynthetic pathway for UDP-N-acetylglucosamine (UDP-GlcNAc). The C-terminal domain catalyzes the transfer of acetyl group from acetyl coenzyme A to glucosamine-1-phosphate (GlcN-1-P) to produce N-acetylglucosamine-1-phosphate (GlcNAc-1-P), which is converted into UDP-GlcNAc by the transfer of uridine 5-monophosphate (from uridine 5-triphosphate), a reaction catalyzed by the N-terminal domain. The polypeptide is Bifunctional protein GlmU (Wolinella succinogenes (strain ATCC 29543 / DSM 1740 / CCUG 13145 / JCM 31913 / LMG 7466 / NCTC 11488 / FDC 602W) (Vibrio succinogenes)).